We begin with the raw amino-acid sequence, 364 residues long: tRNA/tmRNA (uracil-C(5))-methyltransferase (364 aa).

S-adenosyl-L-methionine is bound by residues Q189, Y216, N221, E237, and D297. C322 acts as the Nucleophile in catalysis. E356 acts as the Proton acceptor in catalysis.

Belongs to the class I-like SAM-binding methyltransferase superfamily. RNA M5U methyltransferase family. TrmA subfamily.

It carries out the reaction uridine(54) in tRNA + S-adenosyl-L-methionine = 5-methyluridine(54) in tRNA + S-adenosyl-L-homocysteine + H(+). The catalysed reaction is uridine(341) in tmRNA + S-adenosyl-L-methionine = 5-methyluridine(341) in tmRNA + S-adenosyl-L-homocysteine + H(+). Its function is as follows. Dual-specificity methyltransferase that catalyzes the formation of 5-methyluridine at position 54 (m5U54) in all tRNAs, and that of position 341 (m5U341) in tmRNA (transfer-mRNA). The chain is tRNA/tmRNA (uracil-C(5))-methyltransferase from Campylobacter curvus (strain 525.92).